Here is a 340-residue protein sequence, read N- to C-terminus: Protein RecA (340 aa).

74 to 81 (GPESSGKT) is a binding site for ATP.

This sequence belongs to the RecA family.

It is found in the cytoplasm. Can catalyze the hydrolysis of ATP in the presence of single-stranded DNA, the ATP-dependent uptake of single-stranded DNA by duplex DNA, and the ATP-dependent hybridization of homologous single-stranded DNAs. It interacts with LexA causing its activation and leading to its autocatalytic cleavage. The protein is Protein RecA of Porphyromonas gingivalis (strain ATCC 33277 / DSM 20709 / CIP 103683 / JCM 12257 / NCTC 11834 / 2561).